Here is a 528-residue protein sequence, read N- to C-terminus: Glucose-6-phosphate isomerase (528 aa).

Catalysis depends on Glu322, which acts as the Proton donor. Residues His351 and Lys455 contribute to the active site.

It belongs to the GPI family.

The protein resides in the cytoplasm. It carries out the reaction alpha-D-glucose 6-phosphate = beta-D-fructose 6-phosphate. Its pathway is carbohydrate biosynthesis; gluconeogenesis. It participates in carbohydrate degradation; glycolysis; D-glyceraldehyde 3-phosphate and glycerone phosphate from D-glucose: step 2/4. Functionally, catalyzes the reversible isomerization of glucose-6-phosphate to fructose-6-phosphate. The chain is Glucose-6-phosphate isomerase from Synechococcus elongatus (strain ATCC 33912 / PCC 7942 / FACHB-805) (Anacystis nidulans R2).